The primary structure comprises 294 residues: Ankyrin repeat and SOCS box protein 9 (294 aa).

M1 carries the post-translational modification N-acetylmethionine. 6 ANK repeats span residues S35–I64, D68–G97, D101–P130, D133–H162, H166–Q195, and G198–A227. S51 carries the phosphoserine modification. Residues P240–L294 enclose the SOCS box domain.

This sequence belongs to the ankyrin SOCS box (ASB) family. Substrate-recognition component of the ECS(ASB9) complex, composed of ASB9, CUL5, ELOB, ELOC and RNF7/RBX2. Predominantly expressed in testis, kidney, and liver.

It localises to the mitochondrion. It functions in the pathway protein modification; protein ubiquitination. Functionally, substrate-recognition component of a cullin-5-RING E3 ubiquitin-protein ligase complex (ECS complex, also named CRL5 complex), which mediates the ubiquitination and subsequent proteasomal degradation of target proteins. The ECS(ASB9) complex catalyzes ubiquitination of creatine kinases CKB and CKMT1A. Does not interact with the Elongin BC complex, likely to be a negative regulator of isoform 1. This is Ankyrin repeat and SOCS box protein 9 from Homo sapiens (Human).